The chain runs to 402 residues: Multidrug resistance protein MdtH (402 aa).

10 helical membrane-spanning segments follow: residues 13 to 33, 34 to 54, 99 to 116, 139 to 159, 165 to 185, 214 to 234, 244 to 264, 277 to 297, 340 to 360, and 368 to 388; these read YFLL…FPLI, SIRF…ALGL, PWIL…GTLF, LLMM…SWLL, YVCW…AWLL, VLTL…LPIM, AVKW…YPIA, LMFG…STTL, LGLA…YDMG, and LPWA…YWQF.

It belongs to the major facilitator superfamily. DHA1 family. MdtH (TC 2.A.1.2.21) subfamily.

The protein localises to the cell inner membrane. This is Multidrug resistance protein MdtH from Edwardsiella ictaluri (strain 93-146).